We begin with the raw amino-acid sequence, 398 residues long: 4-hydroxy-3-methylbut-2-en-1-yl diphosphate synthase (ferredoxin) (398 aa).

Residues Cys306, Cys309, Cys340, and Glu347 each coordinate [4Fe-4S] cluster.

This sequence belongs to the IspG family. The cofactor is [4Fe-4S] cluster.

The enzyme catalyses (2E)-4-hydroxy-3-methylbut-2-enyl diphosphate + 2 oxidized [2Fe-2S]-[ferredoxin] + H2O = 2-C-methyl-D-erythritol 2,4-cyclic diphosphate + 2 reduced [2Fe-2S]-[ferredoxin] + H(+). Its pathway is isoprenoid biosynthesis; isopentenyl diphosphate biosynthesis via DXP pathway; isopentenyl diphosphate from 1-deoxy-D-xylulose 5-phosphate: step 5/6. In terms of biological role, converts 2C-methyl-D-erythritol 2,4-cyclodiphosphate (ME-2,4cPP) into 1-hydroxy-2-methyl-2-(E)-butenyl 4-diphosphate. The protein is 4-hydroxy-3-methylbut-2-en-1-yl diphosphate synthase (ferredoxin) of Synechococcus sp. (strain CC9311).